We begin with the raw amino-acid sequence, 1469 residues long: uncharacterized protein (1469 aa).

Residues Gly146–Glu180 are compositionally biased toward basic and acidic residues. Disordered stretches follow at residues Gly146–Gln186, Ile231–Asn255, Thr306–Ser344, Leu430–Tyr455, Pro520–Ser560, Thr654–Arg706, Arg719–Gln755, Tyr881–Asn958, and Asn1329–Asn1369. Low complexity-rich tracts occupy residues Gln232–Asn241, Thr306–Thr327, Leu430–Asn449, Asn523–Asn559, and Thr654–Pro693. Positions Arg719–Lys731 are enriched in polar residues. Pro residues predominate over residues Ser732–Pro749. Low complexity-rich tracts occupy residues Asn1329 to Glu1347 and Arg1354 to Asn1369.

This is an uncharacterized protein from Dictyostelium discoideum (Social amoeba).